A 333-amino-acid chain; its full sequence is Lipoyl synthase (333 aa).

7 residues coordinate [4Fe-4S] cluster: Cys55, Cys60, Cys66, Cys81, Cys85, Cys88, and Ser292. The Radical SAM core domain occupies 67–281 (WEDREATFLI…SAEAERLGFA (215 aa)).

This sequence belongs to the radical SAM superfamily. Lipoyl synthase family. Requires [4Fe-4S] cluster as cofactor.

The protein localises to the cytoplasm. The catalysed reaction is [[Fe-S] cluster scaffold protein carrying a second [4Fe-4S](2+) cluster] + N(6)-octanoyl-L-lysyl-[protein] + 2 oxidized [2Fe-2S]-[ferredoxin] + 2 S-adenosyl-L-methionine + 4 H(+) = [[Fe-S] cluster scaffold protein] + N(6)-[(R)-dihydrolipoyl]-L-lysyl-[protein] + 4 Fe(3+) + 2 hydrogen sulfide + 2 5'-deoxyadenosine + 2 L-methionine + 2 reduced [2Fe-2S]-[ferredoxin]. Its pathway is protein modification; protein lipoylation via endogenous pathway; protein N(6)-(lipoyl)lysine from octanoyl-[acyl-carrier-protein]: step 2/2. Functionally, catalyzes the radical-mediated insertion of two sulfur atoms into the C-6 and C-8 positions of the octanoyl moiety bound to the lipoyl domains of lipoate-dependent enzymes, thereby converting the octanoylated domains into lipoylated derivatives. The protein is Lipoyl synthase of Kineococcus radiotolerans (strain ATCC BAA-149 / DSM 14245 / SRS30216).